The following is a 61-amino-acid chain: Alpha-conotoxin-like Tx1.2 (61 aa).

An N-terminal signal peptide occupies residues 1 to 20 (MFTVFLLVVLATTVVSFTSG). The propeptide occupies 21–42 (RSTFRGRNAAAKASGLVSLTDR). 4-hydroxyproline is present on residues P44 and P50. Disulfide bonds link C46-C52 and C47-C60. Residues 48-50 (SHP) are ser-Xaa-Pro motif, crucial for potent interaction with nAChR.

This sequence belongs to the conotoxin A superfamily. In terms of tissue distribution, expressed by the venom duct.

The protein resides in the secreted. In terms of biological role, alpha-conotoxins act on postsynaptic membranes, they bind to the nicotinic acetylcholine receptors (nAChR) and thus inhibit them. This toxin also inhibits high voltage-activated (HVA) calcium channel currents in rat DRG neurons (8% inhibition at 1 uM toxin) probably by activating GABA(B) receptors (GABBR1 and/or GABBR2). In Conus textile (Cloth-of-gold cone), this protein is Alpha-conotoxin-like Tx1.2.